Here is a 485-residue protein sequence, read N- to C-terminus: Protein hunchback (485 aa).

The segment at 1-77 (TSSTARKTPE…EEDDDIRTPK (77 aa)) is disordered. The span at 16 to 37 (QDQNQLLKTPIQTNGNQQSTFD) shows a compositional bias: polar residues. Residues 59 to 72 (ADVDDENDAEEDDD) are compositionally biased toward acidic residues. 4 C2H2-type zinc fingers span residues 87 to 109 (YKCK…NRIH), 116 to 138 (LKCQ…LRNH), 144 to 166 (FQCK…MKSH), and 172 to 196 (YRCK…KYSH). 3 disordered regions span residues 229-270 (KDEG…PPSS), 318-361 (NGWQ…QVKH), and 398-422 (PKPV…EDDS). The span at 257–270 (NFEQSQHVPTPPSS) shows a compositional bias: polar residues. Over residues 325–335 (NCNEEETPEKE) the composition is skewed to acidic residues. Residues 345 to 358 (DLSSNPSTPSTVSQ) are compositionally biased toward polar residues. Over residues 402-416 (QLQLPTSSTTTPLKT) the composition is skewed to low complexity. 2 C2H2-type zinc fingers span residues 432–454 (YECK…MGYH) and 460–484 (FKCN…RDAH).

The protein belongs to the hunchback C2H2-type zinc-finger protein family.

It is found in the nucleus. Functionally, gap class segmentation protein that controls development of head structures. In Clogmia albipunctata (Mothmidge), this protein is Protein hunchback (hb).